We begin with the raw amino-acid sequence, 102 residues long: Putative septation protein SpoVG 1 (102 aa).

It belongs to the SpoVG family.

Its function is as follows. Could be involved in septation. The polypeptide is Putative septation protein SpoVG 1 (Listeria innocua serovar 6a (strain ATCC BAA-680 / CLIP 11262)).